The chain runs to 540 residues: Chaperonin GroEL (540 aa).

ATP is bound by residues 30-33 (TLGP), Lys51, 87-91 (DGTTT), Gly415, 479-481 (NAA), and Asp495.

Belongs to the chaperonin (HSP60) family. In terms of assembly, forms a cylinder of 14 subunits composed of two heptameric rings stacked back-to-back. Interacts with the co-chaperonin GroES.

It is found in the cytoplasm. The enzyme catalyses ATP + H2O + a folded polypeptide = ADP + phosphate + an unfolded polypeptide.. Functionally, together with its co-chaperonin GroES, plays an essential role in assisting protein folding. The GroEL-GroES system forms a nano-cage that allows encapsulation of the non-native substrate proteins and provides a physical environment optimized to promote and accelerate protein folding. The chain is Chaperonin GroEL from Pluralibacter gergoviae (Enterobacter gergoviae).